A 479-amino-acid chain; its full sequence is Sodium-coupled neutral amino acid transporter 5 (479 aa).

Residues 1–58 (MAISCAVGMEMQEPKMNGTLSTGAAAGYRQEREGFLPTTHGPAPGRKPVQFLDFEGKT) lie on the Cytoplasmic side of the membrane. A helical membrane pass occupies residues 59-81 (SFGMSVFNLSNAIMGSGILGLAY). Residues 82 to 97 (AMAHTGVIFFLALLLC) lie on the Extracellular side of the membrane. A helical transmembrane segment spans residues 98–118 (IALLSSYSIHLLLTCASVVGI). Residues 119 to 135 (RAYEQLGQRAFGPAGKV) lie on the Cytoplasmic side of the membrane. The helical transmembrane segment at 136–156 (VVAIIICLHNVGAMSSYLFII) threads the bilayer. The Extracellular portion of the chain corresponds to 157–176 (KSELPLVIGTFLHMDPEGDW). The helical transmembrane segment at 177-197 (FLKGNLLIILVSLLIILPLAL) threads the bilayer. Residues 198 to 202 (MKHLG) lie on the Cytoplasmic side of the membrane. Residues 203 to 223 (YLGYTSSLSLTCMLFFLISVI) form a helical membrane-spanning segment. The Extracellular portion of the chain corresponds to 224 to 264 (YKKFQLGCVVSHNDTVVESEPAPLQAFNSSCEAKLFTVDSQ). A disulfide bridge links Cys-231 with Cys-254. The N-linked (GlcNAc...) asparagine glycan is linked to Asn-236. Residues 265-285 (MSYTVPIMAFAFVCHPEVLPI) traverse the membrane as a helical segment. At 286–302 (YTELCCPTQRRMQAVAN) the chain is on the cytoplasmic side. A helical transmembrane segment spans residues 303-323 (MSIGAMFIMYGLTATFGYLTF). The Extracellular portion of the chain corresponds to 324 to 341 (YSTVKAEMLEMYTQEDLL). A helical transmembrane segment spans residues 342–362 (ILCVRLAVLLAVTLTVPVVLF). Residues 363-383 (PIRRALQQLLFPSKAFSWPRH) are Cytoplasmic-facing. A helical membrane pass occupies residues 384 to 404 (VAIALILLILVNILVICVPTI). Residues 405–406 (RD) lie on the Extracellular side of the membrane. Residues 407–427 (IFGFIGSTSAPSLIFILPSVF) traverse the membrane as a helical segment. Residues 428–446 (YLRIVPADMEPLFSWPKIQ) lie on the Cytoplasmic side of the membrane. Residues 447-467 (ALCFGVLGVLFMAISLGFMFA) form a helical membrane-spanning segment. At 468–479 (NWATGQSRMSGH) the chain is on the extracellular side.

This sequence belongs to the amino acid/polyamine transporter 2 family. As to expression, highly expressed in neocortex, hippocampus, striatum and spinal cord by astrocytes (at protein level). Expressed in brain, lung, stomach, kidney, spleen and testis. Expressed in the cerebral cortex between the second and third postnatal week, where expressed exclusively in glial cells from postnatal day 14 to adulthood (at protein level). Expressed in the cerebellum at post natal day 12 (P12). Expressed in liver. Expressed inside the cell body of the astrocytes.

The protein localises to the cell membrane. It catalyses the reaction L-serine(out) + Na(+)(out) + H(+)(in) = L-serine(in) + Na(+)(in) + H(+)(out). The enzyme catalyses L-alanine(out) + Na(+)(out) + H(+)(in) = L-alanine(in) + Na(+)(in) + H(+)(out). The catalysed reaction is glycine(out) + Na(+)(out) + H(+)(in) = glycine(in) + Na(+)(in) + H(+)(out). It carries out the reaction L-glutamine(out) + Na(+)(out) + H(+)(in) = L-glutamine(in) + Na(+)(in) + H(+)(out). It catalyses the reaction L-asparagine(out) + Na(+)(out) + H(+)(in) = L-asparagine(in) + Na(+)(in) + H(+)(out). The enzyme catalyses L-histidine(out) + Na(+)(out) + H(+)(in) = L-histidine(in) + Na(+)(in) + H(+)(out). The catalysed reaction is L-cysteine(out) + Na(+)(out) + H(+)(in) = L-cysteine(in) + Na(+)(in) + H(+)(out). With respect to regulation, not inhibited by lithium. Partial allosteric regulation on ions sodium binding. In terms of biological role, symporter that cotransports neutral amino acids and sodium ions, coupled to an H(+) antiporter activity. Releases L-glutamine and glycine from astroglial cells and may participate in the glutamate/GABA-glutamine cycle and the NMDA receptors activation. In addition contributes significantly to L-glutamine uptake in retina, namely in ganglion and Mueller cells and, therefore participates in the retinal glutamate-glutamine cycle. The transport activity is pH sensitive, Li(+) tolerant, bidirectional and associated with large uncoupled fluxes of protons. The transport is electroneutral coupled to the cotransport of 1 Na(+) and the antiport of 1 H(+). May have particular importance for modulation of net hepatic glutamine flux. The polypeptide is Sodium-coupled neutral amino acid transporter 5 (Rattus norvegicus (Rat)).